Reading from the N-terminus, the 374-residue chain is Pyruvate dehydrogenase E1 component subunit beta-1, mitochondrial (374 aa).

A mitochondrion-targeting transit peptide spans 1–34; it reads MLGIARRRLGSGCALGQLMQALRPAAAAAAARTY. Glu-97 lines the thiamine diphosphate pocket. K(+) is bound by residues Ile-150, Ala-198, Ile-199, and Asp-201.

Tetramer of 2 alpha and 2 beta subunits. Thiamine diphosphate is required as a cofactor.

The protein resides in the mitochondrion matrix. It catalyses the reaction N(6)-[(R)-lipoyl]-L-lysyl-[protein] + pyruvate + H(+) = N(6)-[(R)-S(8)-acetyldihydrolipoyl]-L-lysyl-[protein] + CO2. Its function is as follows. The pyruvate dehydrogenase complex catalyzes the overall conversion of pyruvate to acetyl-CoA and CO(2). It contains multiple copies of three enzymatic components: pyruvate dehydrogenase (E1), dihydrolipoamide acetyltransferase (E2) and lipoamide dehydrogenase (E3). This is Pyruvate dehydrogenase E1 component subunit beta-1, mitochondrial from Oryza sativa subsp. japonica (Rice).